The following is a 252-amino-acid chain: Trans-aconitate 2-methyltransferase (252 aa).

The protein belongs to the methyltransferase superfamily. Tam family.

The protein resides in the cytoplasm. The enzyme catalyses trans-aconitate + S-adenosyl-L-methionine = (E)-3-(methoxycarbonyl)pent-2-enedioate + S-adenosyl-L-homocysteine. Functionally, catalyzes the S-adenosylmethionine monomethyl esterification of trans-aconitate. This Escherichia coli O6:K15:H31 (strain 536 / UPEC) protein is Trans-aconitate 2-methyltransferase.